The primary structure comprises 83 residues: Small ribosomal subunit protein eS21 (83 aa).

It belongs to the eukaryotic ribosomal protein eS21 family. In terms of assembly, component of the 40S small ribosomal subunit. Interacts with sta.

It is found in the cytoplasm. The protein resides in the cytosol. Its subcellular location is the rough endoplasmic reticulum. May be an associated component of the ribosome rather than a core structural subunit. May act as a translation initiation factor. Has a role in regulation of cell proliferation in the hematopoietic organs and the imaginal disks of larva. This is Small ribosomal subunit protein eS21 (RpS21) from Drosophila grimshawi (Hawaiian fruit fly).